Here is a 289-residue protein sequence, read N- to C-terminus: Ribosomal protein L11 methyltransferase (289 aa).

Residues T142, G163, D185, and N226 each contribute to the S-adenosyl-L-methionine site.

The protein belongs to the methyltransferase superfamily. PrmA family.

It is found in the cytoplasm. It catalyses the reaction L-lysyl-[protein] + 3 S-adenosyl-L-methionine = N(6),N(6),N(6)-trimethyl-L-lysyl-[protein] + 3 S-adenosyl-L-homocysteine + 3 H(+). In terms of biological role, methylates ribosomal protein L11. This chain is Ribosomal protein L11 methyltransferase, found in Legionella pneumophila (strain Corby).